We begin with the raw amino-acid sequence, 518 residues long: MAGLRNESEQEPLLGDTPGSREWDILETEEHYKSRWRSIRILYLTMFLSSVGFSVVMMSIWPYLQKIDPTADTSFLGWVIASYSLGQMVASPIFGLWSNYRPRKEPLIVSILISVAANCLYAYLHIPASHNKYYMLVARGLLGIGAGNVAVVRSYTAGATSLQERTSSMANISMCQALGFILGPVFQTCFTFLGEKGVTWDVIKLQINMYTTPVLLSAFLGILNIILILAILREHRVDDSGRQCKSINFEEASTDEAQVPQGNIDQVAVVAINVLFFVTLFIFALFETIITPLTMDMYAWTQEQAVLYNGIILAALGVEAVVIFLGVKLLSKKIGERAILLGGLIVVWVGFFILLPWGNQFPKIQWEDLHNNSIPNTTFGEIIIGLWKSPMEDDNERPTGCSIEQAWCLYTPVIHLAQFLTSAVLIGLGYPVCNLMSYTLYSKILGPKPQGVYMGWLTASGSGARILGPMFISQVYAHWGPRWAFSLVCGIIVLTITLLGVVYKRLIALSVRYGRIQE.

The segment at 1 to 20 (MAGLRNESEQEPLLGDTPGS) is disordered. Over 1–40 (MAGLRNESEQEPLLGDTPGSREWDILETEEHYKSRWRSIR) the chain is Cytoplasmic. Residues 13–14 (LL) carry the Dileucine internalization motif motif. Residues 41–61 (ILYLTMFLSSVGFSVVMMSIW) form a helical membrane-spanning segment. Residues 62-74 (PYLQKIDPTADTS) are Extracellular-facing. Residues 75–95 (FLGWVIASYSLGQMVASPIFG) form a helical membrane-spanning segment. Topologically, residues 96-105 (LWSNYRPRKE) are cytoplasmic. A helical transmembrane segment spans residues 106-126 (PLIVSILISVAANCLYAYLHI). Topologically, residues 127–131 (PASHN) are extracellular. The chain crosses the membrane as a helical span at residues 132–152 (KYYMLVARGLLGIGAGNVAVV). The Cytoplasmic segment spans residues 153-173 (RSYTAGATSLQERTSSMANIS). The helical transmembrane segment at 174–194 (MCQALGFILGPVFQTCFTFLG) threads the bilayer. Residues 195–211 (EKGVTWDVIKLQINMYT) are Extracellular-facing. The chain crosses the membrane as a helical span at residues 212 to 232 (TPVLLSAFLGILNIILILAIL). Residues 233–266 (REHRVDDSGRQCKSINFEEASTDEAQVPQGNIDQ) lie on the Cytoplasmic side of the membrane. Residues 267–287 (VAVVAINVLFFVTLFIFALFE) traverse the membrane as a helical segment. Residues 288-304 (TIITPLTMDMYAWTQEQ) lie on the Extracellular side of the membrane. Residues 305–325 (AVLYNGIILAALGVEAVVIFL) traverse the membrane as a helical segment. The Cytoplasmic segment spans residues 326–337 (GVKLLSKKIGER). The helical transmembrane segment at 338 to 358 (AILLGGLIVVWVGFFILLPWG) threads the bilayer. At 359-412 (NQFPKIQWEDLHNNSIPNTTFGEIIIGLWKSPMEDDNERPTGCSIEQAWCLYTP) the chain is on the extracellular side. 2 N-linked (GlcNAc...) asparagine glycosylation sites follow: asparagine 371 and asparagine 376. Residues 413 to 433 (VIHLAQFLTSAVLIGLGYPVC) traverse the membrane as a helical segment. The Cytoplasmic portion of the chain corresponds to 434 to 451 (NLMSYTLYSKILGPKPQG). The helical transmembrane segment at 452-472 (VYMGWLTASGSGARILGPMFI) threads the bilayer. Residues 473–482 (SQVYAHWGPR) lie on the Extracellular side of the membrane. The helical transmembrane segment at 483 to 503 (WAFSLVCGIIVLTITLLGVVY) threads the bilayer. Residues 504 to 518 (KRLIALSVRYGRIQE) lie on the Cytoplasmic side of the membrane.

This sequence belongs to the major facilitator superfamily. In terms of tissue distribution, expressed at very low levels in all tissues tested.

The protein resides in the endosome membrane. Its subcellular location is the lysosome membrane. It catalyses the reaction chloride(in) = chloride(out). The enzyme catalyses iodide(out) = iodide(in). It carries out the reaction fluoride(in) = fluoride(out). Its activity is regulated as follows. Inhibited by chloride channel blockers 4,4'-diisothiocyano-2,2'-stilbenedisulfonate (DIDS), niflumic acid (NFA), and 5-Nitro-2-(3-phenylpropylamino) benzoic acid (NPPB). Functionally, outward-rectifying chloride channel involved in endolysosomal chloride homeostasis, membrane fusion and function. Conducts chloride currents up to hundreds of picoamperes. Regulates lysosomal calcium content by reducing the lysosomal membrane potential, thereby activating TRPML1 channel and further release of lysosomal calcium ions. Regulates the pH in endolysosomal compartments and may contribute to progressive acidification from endosome to lysosome. Permeable to other halides such as iodide and fluoride ions. This chain is Major facilitator superfamily domain-containing protein 8, found in Homo sapiens (Human).